Consider the following 215-residue polypeptide: uncharacterized protein (215 aa).

The protein to T.pallidum TP_0127, TP_0618 and TP_0619.

This is an uncharacterized protein from Treponema pallidum (strain Nichols).